Here is a 176-residue protein sequence, read N- to C-terminus: Inner membrane-spanning protein YciB (176 aa).

Helical transmembrane passes span 3–23 (FLFD…WGIF), 24–44 (TATA…AFRH), 49–69 (TMLW…LVLH), 81–101 (LYWL…NNLI), 119–139 (LNVA…YVVH), and 149–169 (FKLF…SLWL).

It belongs to the YciB family.

The protein localises to the cell inner membrane. Its function is as follows. Plays a role in cell envelope biogenesis, maintenance of cell envelope integrity and membrane homeostasis. The chain is Inner membrane-spanning protein YciB from Burkholderia ambifaria (strain MC40-6).